The following is a 1468-amino-acid chain: DNA-directed RNA polymerase subunit beta (1468 aa).

Belongs to the RNA polymerase beta chain family. In terms of assembly, the RNAP catalytic core consists of 2 alpha, 1 beta, 1 beta' and 1 omega subunit. When a sigma factor is associated with the core the holoenzyme is formed, which can initiate transcription.

It catalyses the reaction RNA(n) + a ribonucleoside 5'-triphosphate = RNA(n+1) + diphosphate. DNA-dependent RNA polymerase catalyzes the transcription of DNA into RNA using the four ribonucleoside triphosphates as substrates. The protein is DNA-directed RNA polymerase subunit beta of Aquifex aeolicus (strain VF5).